We begin with the raw amino-acid sequence, 117 residues long: Cuticle protein CP1246 (117 aa).

4 tandem repeats follow at residues 1-17 (NYGESGIVYPDGRLVQF), 26-43 (AEIGEAGVVMHDGTHVQF), 67-84 (QSYGYSGIIMPDGNNRQF), and 93-110 (VLVGPSGAVTADGKNVQF).

In terms of tissue distribution, calcified shell.

In Cancer pagurus (Rock crab), this protein is Cuticle protein CP1246.